We begin with the raw amino-acid sequence, 566 residues long: Type 2 DNA topoisomerase 6 subunit B (566 aa).

ATP contacts are provided by residues N48, D80, 101 to 102 (TK), 111 to 118 (GQQGIGIS), and K475.

This sequence belongs to the TOP6B family. Homodimer. Heterotetramer of two Top6A and two Top6B chains.

The catalysed reaction is ATP-dependent breakage, passage and rejoining of double-stranded DNA.. Functionally, relaxes both positive and negative superturns and exhibits a strong decatenase activity. This is Type 2 DNA topoisomerase 6 subunit B from Thermococcus sibiricus (strain DSM 12597 / MM 739).